A 372-amino-acid chain; its full sequence is Putative glutamate--cysteine ligase 2 (372 aa).

The protein belongs to the glutamate--cysteine ligase type 2 family. YbdK subfamily.

The catalysed reaction is L-cysteine + L-glutamate + ATP = gamma-L-glutamyl-L-cysteine + ADP + phosphate + H(+). In terms of biological role, ATP-dependent carboxylate-amine ligase which exhibits weak glutamate--cysteine ligase activity. This Gloeobacter violaceus (strain ATCC 29082 / PCC 7421) protein is Putative glutamate--cysteine ligase 2.